The following is a 187-amino-acid chain: Putative type I specificity subunit S.MpnORF289P N-terminus (187 aa).

This sequence belongs to the type-I restriction system S methylase family. In terms of assembly, the methyltransferase is composed of M and S polypeptides.

The N-terminal section of a specificity (S) subunit of a type I methyltransferase (MTase); this subunit dictates DNA sequence specificity. The single R subunit has multiple frameshifts and is probably not expressed. This chain is Putative type I specificity subunit S.MpnORF289P N-terminus, found in Mycoplasma pneumoniae (strain ATCC 29342 / M129 / Subtype 1) (Mycoplasmoides pneumoniae).